A 452-amino-acid chain; its full sequence is Tubulin alpha-1 chain (452 aa).

Glutamine 11 contacts GTP. Lysine 40 bears the N6-acetyllysine mark. Positions 71, 140, 144, 145, 179, 206, and 228 each coordinate GTP. Glutamate 71 contacts Mg(2+). Residue glutamate 254 is part of the active site. The tract at residues 433 to 452 (EEVGVDSADAEGEEEEGDEY) is disordered.

This sequence belongs to the tubulin family. As to quaternary structure, dimer of alpha and beta chains. A typical microtubule is a hollow water-filled tube with an outer diameter of 25 nm and an inner diameter of 15 nM. Alpha-beta heterodimers associate head-to-tail to form protofilaments running lengthwise along the microtubule wall with the beta-tubulin subunit facing the microtubule plus end conferring a structural polarity. Microtubules usually have 13 protofilaments but different protofilament numbers can be found in some organisms and specialized cells. It depends on Mg(2+) as a cofactor. Undergoes a tyrosination/detyrosination cycle, the cyclic removal and re-addition of a C-terminal tyrosine residue by the enzymes tubulin tyrosine carboxypeptidase (TTCP) and tubulin tyrosine ligase (TTL), respectively. In terms of processing, acetylation of alpha chains at Lys-40 stabilizes microtubules and affects affinity and processivity of microtubule motors. This modification has a role in multiple cellular functions, ranging from cell motility, cell cycle progression or cell differentiation to intracellular trafficking and signaling.

It is found in the cytoplasm. The protein resides in the cytoskeleton. The enzyme catalyses GTP + H2O = GDP + phosphate + H(+). Functionally, tubulin is the major constituent of microtubules, a cylinder consisting of laterally associated linear protofilaments composed of alpha- and beta-tubulin heterodimers. Microtubules grow by the addition of GTP-tubulin dimers to the microtubule end, where a stabilizing cap forms. Below the cap, tubulin dimers are in GDP-bound state, owing to GTPase activity of alpha-tubulin. This chain is Tubulin alpha-1 chain, found in Paracentrotus lividus (Common sea urchin).